The chain runs to 580 residues: Malto-oligosyltrehalose trehalohydrolase (580 aa).

The disordered stretch occupies residues 56 to 88 (LPDPRSARQPDGVHARSQRWEPPGQFGAARTDT). The segment covering 60–69 (RSARQPDGVH) has biased composition (basic and acidic residues). 245-250 (RLDAVH) contacts substrate. The active-site Nucleophile is the D247. E284 serves as the catalytic Proton donor. Substrate-binding positions include 309 to 313 (DDIHH) and 379 to 384 (HDQVGN).

The protein belongs to the glycosyl hydrolase 13 family.

Its subcellular location is the cytoplasm. The catalysed reaction is hydrolysis of (1-&gt;4)-alpha-D-glucosidic linkage in 4-alpha-D-[(1-&gt;4)-alpha-D-glucanosyl]n trehalose to yield trehalose and (1-&gt;4)-alpha-D-glucan.. Its pathway is glycan biosynthesis; trehalose biosynthesis. In terms of biological role, is involved in the biosynthesis of trehalose but not in that of capsular glucan and glycogen. This chain is Malto-oligosyltrehalose trehalohydrolase (treZ), found in Mycobacterium tuberculosis (strain CDC 1551 / Oshkosh).